A 916-amino-acid chain; its full sequence is Protein translocase subunit SecA (916 aa).

Residues Gln-87, 105-109 (GEGKT), and Asp-512 contribute to the ATP site. The segment at 857–916 (QHAEAPSMEQAVAGEEEELPEGPAPVVPLEPVRNEQKIGRNEPCPCGSGKKYKHCHGQLD) is disordered. The Zn(2+) site is built by Cys-900, Cys-902, Cys-911, and His-912. A compositionally biased stretch (basic residues) spans 906–916 (KKYKHCHGQLD).

The protein belongs to the SecA family. Monomer and homodimer. Part of the essential Sec protein translocation apparatus which comprises SecA, SecYEG and auxiliary proteins SecDF-YajC and YidC. Zn(2+) serves as cofactor.

It localises to the cell inner membrane. Its subcellular location is the cytoplasm. It catalyses the reaction ATP + H2O + cellular proteinSide 1 = ADP + phosphate + cellular proteinSide 2.. Its function is as follows. Part of the Sec protein translocase complex. Interacts with the SecYEG preprotein conducting channel. Has a central role in coupling the hydrolysis of ATP to the transfer of proteins into and across the cell membrane, serving both as a receptor for the preprotein-SecB complex and as an ATP-driven molecular motor driving the stepwise translocation of polypeptide chains across the membrane. The polypeptide is Protein translocase subunit SecA (Pseudomonas aeruginosa (strain UCBPP-PA14)).